The primary structure comprises 375 residues: 23S rRNA (uracil(747)-C(5))-methyltransferase RlmC (375 aa).

[4Fe-4S] cluster is bound by residues cysteine 3, cysteine 11, cysteine 14, and cysteine 87. S-adenosyl-L-methionine-binding residues include glutamine 212, phenylalanine 241, glutamate 262, and asparagine 307. Cysteine 334 acts as the Nucleophile in catalysis.

Belongs to the class I-like SAM-binding methyltransferase superfamily. RNA M5U methyltransferase family. RlmC subfamily.

The enzyme catalyses uridine(747) in 23S rRNA + S-adenosyl-L-methionine = 5-methyluridine(747) in 23S rRNA + S-adenosyl-L-homocysteine + H(+). Its function is as follows. Catalyzes the formation of 5-methyl-uridine at position 747 (m5U747) in 23S rRNA. This Escherichia coli (strain SE11) protein is 23S rRNA (uracil(747)-C(5))-methyltransferase RlmC.